Reading from the N-terminus, the 101-residue chain is MSKKCMINRELKRIRVARKYAARRIELKTQMRDESLSPEERQRVMLKFHSLPRDSSPVRQRRRCRSTGRPRGYIRKFGLSRNRLREVAMRGDVPGLVKASW.

The tract at residues 52–72 (PRDSSPVRQRRRCRSTGRPRG) is disordered. Residues 59 to 72 (RQRRRCRSTGRPRG) show a composition bias toward basic residues.

This sequence belongs to the universal ribosomal protein uS14 family. In terms of assembly, part of the 30S ribosomal subunit. Contacts proteins S3 and S10.

In terms of biological role, binds 16S rRNA, required for the assembly of 30S particles and may also be responsible for determining the conformation of the 16S rRNA at the A site. This chain is Small ribosomal subunit protein uS14, found in Nitrosococcus oceani (strain ATCC 19707 / BCRC 17464 / JCM 30415 / NCIMB 11848 / C-107).